The chain runs to 69 residues: uncharacterized protein (69 aa).

4Fe-4S ferredoxin-type domains lie at 2-30 (KIEI…KSKK) and 38-67 (PPIP…IELS). Residues cysteine 10, cysteine 13, cysteine 16, cysteine 20, cysteine 47, cysteine 50, cysteine 53, and cysteine 57 each contribute to the [4Fe-4S] cluster site.

It depends on [4Fe-4S] cluster as a cofactor.

This is an uncharacterized protein from Methanocaldococcus jannaschii (strain ATCC 43067 / DSM 2661 / JAL-1 / JCM 10045 / NBRC 100440) (Methanococcus jannaschii).